Consider the following 1700-residue polypeptide: MPPKPKQKAKQPSQQPPPPPPPAAAQLIEDILSSDEEEGGVKLPTKSSVKNALKKVKKERDRELIRQLKDQQDMELEALQAIFNDEFITMDPIIINRNMDTIIEGIKPIRESARFRITIKPYVGDDEKCFVSIYLVVGFPEKYPVVLPSIQVLVNKGLPQKKAIELEEKLIRESQGKIGNIMIFDLCEIAKDFLNENNFEPTQSIHHDFRSHQQKISIEISTNEQQQQQLQQLQQLQLQYNNDTKKEWESTLEESQLKEDRKNYRLQKSIQRAQYEKERKKTIVNEFTNGPQSKLSKQQRNIDYSIDHSINNNNNNNNNAFNNFNNNNNNNNTNNSNVSSIDNKTIDKQQTMILHLLRLLCQNDSNITNDHIKTLGEQLVQMGIFNRNHLSLLNMHNSNDNQIYQHIFQDYFLKQFNDISLSDLKNNVDSAANNSGHFLNKFWDTLNKTNENSGLKKSPSTFEYSGEGGGGGVGGGSSQKTINPHQQSRYHSDFEEIQLLGRGGFGQVVKVRNKLDGRYYAIKKIKLDSNQSLNRRILREVITLSRLHHQHVVRYYQAWIESAESLSLTNDNSDDDDDDDDEFESGSESEESQSESESESSESEESSESEESSESSESEESEESEYSDDSEFESEENNDFDQSFSEVFLFQNGNKRSLEFDLTDDSYSFLHSDCGFLLEVFDLNNKIGGNNTRSMGSSNQHLQQQQQQNQSQQQKKQPQQNQSQQQKKLKNSNSKSKSKSKSKSKSKSKSNSKKSISSSKLKNIKKSTSIPYLYIQMEYCQKILRNLTETGMNLEDDDIWKLFRQIVEGMAYVHGQGIIHRDLKPSNIFFDSCGDIKIGDFGLAINNKTTSTLSPTTNINSSTSSAGSLTTSSNSVQSVINTKQQQQQQQPQNYWEDEVEGQQQQQQQQQQQQQQQQQQQQQQQQHTARVGTLFYTSPEQEAGTNGDSAYDDKVDMYSLGIVFFEMWYVFSTGHERVIVLRNLREKFEFPSDFERNHSRQATLIRMLIDKDPAKRPSAQQLLQSELMPPKMEDEYIKNSIRVITNPTNQFYQTMLNSLFSQNHQHLHSHIYHHQQSSVTSSSYSKSLFCSLDLLQVKQLVDDVIITILKKHNANEMLTPQMSIIKEWNEQPNLFNNSSSSSSTTTTTSTTNTANNTNSVVINKSTSTSNINKVSNKTGKSILMDDSGQLLELRHDLRVSFKSFIETEFLNLGDHYKHHHQQQNDVRHDNSSNGNSNNNNSNDRHHDQDKSNTTTRSVDEILELLSKAPIKRYEFGHVFRKPHLVGKLPKELSQFCFDVFGSSSLYSDAETIKVTTEIFDSLPSTQNFYFVRLNHFGIVEYMWKFIGITDLTLKNEISQVVSQLIRQPWFTVKKVLLEKFKLPLKQVERIANWVLVKGTIPDVLKKLDASQNNNPLLSGNGSLGNNNNNNNNNNNVRISSSFTDLLEDIRQLAVYFEKMSISPHKVIFDLSYCFSENFYSTGIMFQVILKEEKHECLAVGGRYDSPLNLNNSNNSSSSSSSSSSNNNNSYNNYNNNNNYNYNYYSNCYLTNFNLPITGLSVAMDKVYSRERELYSQKRRQQLPPTLSSESQMIAHKFSTPDIFVISLGPNLFLERIGIVGDLCNAGFNAETMYIENPTPEEQQDASITSGALYIITIKEKGAKKTIKVKNIEKRREDDVSRDEIVKFFTLSNFNSKSRLNI.

The segment at Met1 to Ala25 is disordered. A compositionally biased stretch (pro residues) spans Gln14–Ala23. Residues Met74–Asn197 enclose the RWD domain. The segment covering Gly454–Glu463 has biased composition (polar residues). Positions Gly454 to Ser488 are disordered. Gly residues predominate over residues Gly466 to Ser477. Over residues Gln479–Ser488 the composition is skewed to polar residues. Positions Phe494–Met1027 constitute a Protein kinase domain. ATP contacts are provided by residues Leu500–Val508 and Lys523. 2 disordered regions span residues Leu568–Asp639 and Gly689–Lys760. Positions Asn572 to Asp639 are enriched in acidic residues. Over residues Ser697 to Lys735 the composition is skewed to low complexity. Positions Ser736–Ser752 are enriched in basic residues. Residue Asp822 is the Proton acceptor of the active site. 4 stretches are compositionally biased toward low complexity: residues Thr850 to Ser875, Asn1135 to Ser1158, Ser1230 to Ser1240, and Asn1509 to Asn1531. 4 disordered regions span residues Thr850–Gly901, Phe1134–Val1160, Lys1216–Thr1253, and Asn1507–Asn1531.

The protein belongs to the protein kinase superfamily. Ser/Thr protein kinase family. GCN2 subfamily.

The catalysed reaction is L-seryl-[protein] + ATP = O-phospho-L-seryl-[protein] + ADP + H(+). It catalyses the reaction L-threonyl-[protein] + ATP = O-phospho-L-threonyl-[protein] + ADP + H(+). The protein is Probable serine/threonine-protein kinase ifkC (ifkC) of Dictyostelium discoideum (Social amoeba).